A 79-amino-acid polypeptide reads, in one-letter code: Translational regulator CsrA (79 aa).

Belongs to the CsrA/RsmA family. As to quaternary structure, homodimer; the beta-strands of each monomer intercalate to form a hydrophobic core, while the alpha-helices form wings that extend away from the core.

The protein localises to the cytoplasm. Its function is as follows. A translational regulator that binds mRNA to regulate translation initiation and/or mRNA stability. Usually binds in the 5'-UTR at or near the Shine-Dalgarno sequence preventing ribosome-binding, thus repressing translation. Its main target seems to be the major flagellin gene, while its function is anatagonized by FliW. This is Translational regulator CsrA from Syntrophus aciditrophicus (strain SB).